We begin with the raw amino-acid sequence, 969 residues long: Putative zinc protease mug138 (969 aa).

Position 68 (histidine 68) interacts with Zn(2+). The Proton acceptor role is filled by glutamate 71. Zn(2+)-binding residues include histidine 72 and glutamate 149.

Belongs to the peptidase M16 family.

It is found in the cytoplasm. Its function is as follows. Has a role in meiosis. The polypeptide is Putative zinc protease mug138 (mug138) (Schizosaccharomyces pombe (strain 972 / ATCC 24843) (Fission yeast)).